We begin with the raw amino-acid sequence, 355 residues long: Protein-glutamate methylesterase/protein-glutamine glutaminase 3 (355 aa).

Residues Arg8 to Glu126 form the Response regulatory domain. 4-aspartylphosphate is present on Asp59. A CheB-type methylesterase domain is found at Pro152–Gln337. Catalysis depends on residues Ser166, His193, and Asp284.

The protein belongs to the CheB family. Post-translationally, phosphorylated by CheA. Phosphorylation of the N-terminal regulatory domain activates the methylesterase activity.

The protein localises to the cytoplasm. The catalysed reaction is [protein]-L-glutamate 5-O-methyl ester + H2O = L-glutamyl-[protein] + methanol + H(+). The enzyme catalyses L-glutaminyl-[protein] + H2O = L-glutamyl-[protein] + NH4(+). Involved in chemotaxis. Part of a chemotaxis signal transduction system that modulates chemotaxis in response to various stimuli. Catalyzes the demethylation of specific methylglutamate residues introduced into the chemoreceptors (methyl-accepting chemotaxis proteins or MCP) by CheR. Also mediates the irreversible deamidation of specific glutamine residues to glutamic acid. This chain is Protein-glutamate methylesterase/protein-glutamine glutaminase 3, found in Myxococcus xanthus (strain DK1622).